The primary structure comprises 272 residues: Large ribosomal subunit protein uL2 (272 aa).

The disordered stretch occupies residues 222 to 272 (GVAMNPIDHPLGGGEGKSSGGRAACTPWGKPEGVKTRKNKRTDKFIIKRRK). The segment covering 263–272 (TDKFIIKRRK) has biased composition (basic and acidic residues).

It belongs to the universal ribosomal protein uL2 family. Part of the 50S ribosomal subunit. Forms a bridge to the 30S subunit in the 70S ribosome.

One of the primary rRNA binding proteins. Required for association of the 30S and 50S subunits to form the 70S ribosome, for tRNA binding and peptide bond formation. It has been suggested to have peptidyltransferase activity; this is somewhat controversial. Makes several contacts with the 16S rRNA in the 70S ribosome. In Thermodesulfovibrio yellowstonii (strain ATCC 51303 / DSM 11347 / YP87), this protein is Large ribosomal subunit protein uL2.